Consider the following 673-residue polypeptide: DNA ligase (673 aa).

NAD(+)-binding positions include 34–38, 83–84, and glutamate 116; these read DAEYD and SL. Lysine 118 serves as the catalytic N6-AMP-lysine intermediate. Residues arginine 139, glutamate 176, lysine 293, and lysine 317 each contribute to the NAD(+) site. The Zn(2+) site is built by cysteine 411, cysteine 414, cysteine 429, and cysteine 435. Positions 595–673 constitute a BRCT domain; it reads NQQNPFFGKT…EDEFLKWVNS (79 aa).

This sequence belongs to the NAD-dependent DNA ligase family. LigA subfamily. Mg(2+) is required as a cofactor. Mn(2+) serves as cofactor.

The catalysed reaction is NAD(+) + (deoxyribonucleotide)n-3'-hydroxyl + 5'-phospho-(deoxyribonucleotide)m = (deoxyribonucleotide)n+m + AMP + beta-nicotinamide D-nucleotide.. Its function is as follows. DNA ligase that catalyzes the formation of phosphodiester linkages between 5'-phosphoryl and 3'-hydroxyl groups in double-stranded DNA using NAD as a coenzyme and as the energy source for the reaction. It is essential for DNA replication and repair of damaged DNA. The chain is DNA ligase from Legionella pneumophila (strain Paris).